A 347-amino-acid chain; its full sequence is Selenide, water dikinase (347 aa).

Residue Cys17 is part of the active site. ATP is bound by residues Lys20 and 48-50 (TRD). Asp51 serves as a coordination point for Mg(2+). Residues Asp68, Asp91, and 139–141 (GHS) each bind ATP. Asp91 contributes to the Mg(2+) binding site. Mg(2+) is bound at residue Asp227.

Belongs to the selenophosphate synthase 1 family. Class I subfamily. Homodimer. Mg(2+) serves as cofactor.

It carries out the reaction hydrogenselenide + ATP + H2O = selenophosphate + AMP + phosphate + 2 H(+). Synthesizes selenophosphate from selenide and ATP. The protein is Selenide, water dikinase of Shigella flexneri serotype 5b (strain 8401).